Here is a 1288-residue protein sequence, read N- to C-terminus: Peroxidasin homolog (1288 aa).

An N-terminal signal peptide occupies residues 1 to 16 (MNLLLYLLLLVPWVLG). The LRRNT domain maps to 17–51 (SEDGCPAKCTCDKKGFTVDCSNAGLTRIPKGISSN). LRR repeat units follow at residues 27–49 (CDKK…KGIS), 50–72 (SNVR…DLEG), 73–96 (FPLL…ILDH), 97–120 (LPEL…ASES), 122–143 (PLAS…WLLQ), 145–168 (FPEL…LFEN), and 204–227 (AYCT…LLKC). One can recognise an LRRCT domain in the interval 180–228 (NPWNCDCRVTKVKALLRKVEWERKAYCTNPVELRHQAIDEVEESLLKCA). N-linked (GlcNAc...) asparagine glycosylation occurs at Asn-247. A disordered region spans residues 304–323 (LRQSHHSNGAPQFTYKPRDN). 2 consecutive Ig-like C2-type domains span residues 314–400 (PQFT…FSLD) and 407–494 (PNIY…AKLT). Cys-335 and Cys-384 form a disulfide bridge. LRR repeat units follow at residues 356-381 (SSRK…DSGR) and 387-412 (VNSL…IYEG). A disulfide bond links Cys-428 and Cys-478. N-linked (GlcNAc...) asparagine glycosylation is present at Asn-594. A disulfide bridge connects residues Cys-624 and Cys-640. Asp-718 provides a ligand contact to heme b. His-719 (proton acceptor) is an active-site residue. Asp-720 provides a ligand contact to Ca(2+). 2 disulfides stabilise this stretch: Cys-739–Cys-749 and Cys-743–Cys-770. N-linked (GlcNAc...) asparagine glycosylation is present at Asn-740. 4 residues coordinate Ca(2+): Thr-802, Phe-804, Asp-806, and Ser-808. Asn-857 is a glycosylation site (N-linked (GlcNAc...) asparagine). Glu-876 and His-972 together coordinate heme b. LRR repeat units lie at residues 998–1022 (KAFF…LFAS) and 1049–1073 (SLDL…EYRQ). Cystine bridges form between Cys-1075-Cys-1132 and Cys-1173-Cys-1200. One copy of the LRR 12 repeat lies at 1168–1189 (LARLLCDNGDEIDRIQKDVFMY).

Belongs to the peroxidase family. XPO subfamily. Ca(2+) serves as cofactor. The cofactor is heme b.

It localises to the secreted. The protein resides in the extracellular space. The protein localises to the extracellular matrix. It catalyses the reaction L-lysyl-[collagen] + L-methionyl-[collagen] + H2O2 = [collagen]-L-lysyl-N-S-L-methionyl-[collagen] + 2 H2O + H(+). It carries out the reaction bromide + H2O2 = hypobromite + H2O. The enzyme catalyses L-lysyl-[collagen] + L-methionyl-[collagen] + hypobromite = [collagen]-L-lysyl-N-S-L-methionyl-[collagen] + bromide + H2O + H(+). The catalysed reaction is L-tyrosyl-[protein] + bromide + H2O2 + H(+) = 3-bromo-L-tyrosyl-[protein] + 2 H2O. It catalyses the reaction hypobromite + L-tyrosyl-[protein] + H(+) = 3-bromo-L-tyrosyl-[protein] + H2O. Its function is as follows. Catalyzes the two-electron oxidation of bromide by hydrogen peroxide and generates hypobromite as a reactive intermediate which mediates the formation of sulfilimine cross-links between methionine and hydroxylysine residues within an uncross-linked collagen IV NC1 hexamer. Plays a role in the attachment of tissues and in axonal guidance during early developmental stages. May functionally antagonize the peroxidasin pxn-2 to maintain neuronal development. The sequence is that of Peroxidasin homolog from Caenorhabditis briggsae.